Reading from the N-terminus, the 631-residue chain is Eukaryotic translation initiation factor 3 subunit L (631 aa).

One can recognise a PCI domain in the interval 335-526 (TFVSVLIFFI…AETTLLDGER (192 aa)). The interval 571-631 (KSAPLPVRKP…PKSRQARIAA (61 aa)) is disordered. Low complexity predominate over residues 580–612 (PASSSAPAPATTAAPISKSGESAAPAPAEAPAA).

This sequence belongs to the eIF-3 subunit L family. Component of the eukaryotic translation initiation factor 3 (eIF-3) complex.

The protein localises to the cytoplasm. Component of the eukaryotic translation initiation factor 3 (eIF-3) complex, which is involved in protein synthesis of a specialized repertoire of mRNAs and, together with other initiation factors, stimulates binding of mRNA and methionyl-tRNAi to the 40S ribosome. The eIF-3 complex specifically targets and initiates translation of a subset of mRNAs involved in cell proliferation. The protein is Eukaryotic translation initiation factor 3 subunit L of Cryptococcus neoformans var. neoformans serotype D (strain B-3501A) (Filobasidiella neoformans).